The chain runs to 144 residues: Large ribosomal subunit protein uL16 (144 aa).

Residues 1–16 (MLQPKKTKFRRQQKGR) show a composition bias toward basic residues. Residues 1–22 (MLQPKKTKFRRQQKGRMKGEAQ) are disordered.

The protein belongs to the universal ribosomal protein uL16 family. In terms of assembly, part of the 50S ribosomal subunit.

Functionally, binds 23S rRNA and is also seen to make contacts with the A and possibly P site tRNAs. This Parabacteroides distasonis (strain ATCC 8503 / DSM 20701 / CIP 104284 / JCM 5825 / NCTC 11152) protein is Large ribosomal subunit protein uL16.